A 112-amino-acid chain; its full sequence is DNA-binding protein TON_1102 (112 aa).

This sequence belongs to the PDCD5 family.

This is DNA-binding protein TON_1102 from Thermococcus onnurineus (strain NA1).